Here is a 149-residue protein sequence, read N- to C-terminus: Calmodulin-2 (149 aa).

EF-hand domains follow at residues 8–43 (DQIS…LGQN), 44–79 (PTEA…KMKD), 81–116 (DSEE…LGEK), and 117–149 (LTDE…MMAK). Ca(2+) is bound by residues Asp-21, Asp-23, Asp-25, Cys-27, Glu-32, Asp-57, Asp-59, Asn-61, Thr-63, Glu-68, Asp-94, Asp-96, Asn-98, Glu-105, Asp-130, Asp-132, Asp-134, Gln-136, and Glu-141.

This sequence belongs to the calmodulin family. In terms of assembly, interacts with KCBP and CIP111. Binds to IQD1 and IQD20.

The protein localises to the cytoplasm. It is found in the cytoskeleton. Functionally, calmodulin mediates the control of a large number of enzymes, ion channels and other proteins by Ca(2+). Among the enzymes to be stimulated by the calmodulin-Ca(2+) complex are a number of protein kinases and phosphatases. This is Calmodulin-2 (CAM2) from Arabidopsis thaliana (Mouse-ear cress).